The sequence spans 318 residues: NADH-ubiquinone oxidoreductase chain 1 (318 aa).

The next 8 helical transmembrane spans lie at 2–22, 69–89, 98–118, 140–160, 171–191, 222–242, 253–273, and 285–305; these read FMAN…FLTL, MLYL…WTPL, FNLG…SILW, ISYE…SGSF, HSWL…STLA, LFFM…TTIF, ETYS…FLWI, and LMHL…MWYI.

This sequence belongs to the complex I subunit 1 family. Core subunit of respiratory chain NADH dehydrogenase (Complex I) which is composed of 45 different subunits.

The protein resides in the mitochondrion inner membrane. It catalyses the reaction a ubiquinone + NADH + 5 H(+)(in) = a ubiquinol + NAD(+) + 4 H(+)(out). Its function is as follows. Core subunit of the mitochondrial membrane respiratory chain NADH dehydrogenase (Complex I) which catalyzes electron transfer from NADH through the respiratory chain, using ubiquinone as an electron acceptor. Essential for the catalytic activity and assembly of complex I. The protein is NADH-ubiquinone oxidoreductase chain 1 (MT-ND1) of Saguinus leucopus (Silvery-brown bare-face tamarin).